Consider the following 155-residue polypeptide: Effector protein PevD1 (155 aa).

A signal peptide spans 1 to 18 (MQFTLAAAAALFGASALA). In terms of domain architecture, AA1-like spans 33 to 148 (NMYENIDIAD…NPTTIVIDSL (116 aa)). Intrachain disulfides connect cysteine 70-cysteine 84 and cysteine 125-cysteine 135.

In terms of assembly, monomer. Interacts with Arabidopsis thaliana NRP.

The protein resides in the secreted. Effector protein. Elicits a hypersensitive response (HR) in tobacco plants (N.tabacum) and cotton (G.hirsutum). Boosts systemic acquired resistance (SAR) to tobacco mosaic virus (TMV) infection in N.tabacum and to V.dhaliae infection in primed cotton seedlings. This chain is Effector protein PevD1, found in Verticillium dahliae (Verticillium wilt).